A 322-amino-acid polypeptide reads, in one-letter code: Ribosomal RNA small subunit methyltransferase H (322 aa).

Residues Gly43 to Tyr45, Asp60, Phe86, Asp104, and Gln111 contribute to the S-adenosyl-L-methionine site.

The protein belongs to the methyltransferase superfamily. RsmH family.

It is found in the cytoplasm. The catalysed reaction is cytidine(1402) in 16S rRNA + S-adenosyl-L-methionine = N(4)-methylcytidine(1402) in 16S rRNA + S-adenosyl-L-homocysteine + H(+). In terms of biological role, specifically methylates the N4 position of cytidine in position 1402 (C1402) of 16S rRNA. The chain is Ribosomal RNA small subunit methyltransferase H from Caulobacter sp. (strain K31).